The primary structure comprises 368 residues: Aspartate-semialdehyde dehydrogenase (368 aa).

NADP(+) contacts are provided by residues 10–13 (RGMV), 37–38 (TS), and Gln-72. Arg-101 lines the phosphate pocket. Residue Cys-134 is the Acyl-thioester intermediate of the active site. NADP(+) is bound by residues 160–161 (SG) and Pro-191. Glu-239 serves as a coordination point for substrate. Phosphate is bound at residue Lys-242. A substrate-binding site is contributed by Arg-266. The active-site Proton acceptor is His-273. Gln-349 is an NADP(+) binding site.

The protein belongs to the aspartate-semialdehyde dehydrogenase family. Homodimer.

It catalyses the reaction L-aspartate 4-semialdehyde + phosphate + NADP(+) = 4-phospho-L-aspartate + NADPH + H(+). It participates in amino-acid biosynthesis; L-lysine biosynthesis via DAP pathway; (S)-tetrahydrodipicolinate from L-aspartate: step 2/4. The protein operates within amino-acid biosynthesis; L-methionine biosynthesis via de novo pathway; L-homoserine from L-aspartate: step 2/3. It functions in the pathway amino-acid biosynthesis; L-threonine biosynthesis; L-threonine from L-aspartate: step 2/5. In terms of biological role, catalyzes the NADPH-dependent formation of L-aspartate-semialdehyde (L-ASA) by the reductive dephosphorylation of L-aspartyl-4-phosphate. In Azotobacter vinelandii, this protein is Aspartate-semialdehyde dehydrogenase.